The chain runs to 268 residues: NH(3)-dependent NAD(+) synthetase (268 aa).

46-53 (GVSGGQDS) serves as a coordination point for ATP. Aspartate 52 is a binding site for Mg(2+). Arginine 140 is a deamido-NAD(+) binding site. Threonine 160 is a binding site for ATP. A Mg(2+)-binding site is contributed by glutamate 165. Deamido-NAD(+) contacts are provided by lysine 173 and aspartate 180. An ATP-binding site is contributed by lysine 189. Position 260–261 (260–261 (HK)) interacts with deamido-NAD(+).

It belongs to the NAD synthetase family. In terms of assembly, homodimer.

It carries out the reaction deamido-NAD(+) + NH4(+) + ATP = AMP + diphosphate + NAD(+) + H(+). The protein operates within cofactor biosynthesis; NAD(+) biosynthesis; NAD(+) from deamido-NAD(+) (ammonia route): step 1/1. Catalyzes the ATP-dependent amidation of deamido-NAD to form NAD. Uses ammonia as a nitrogen source. The sequence is that of NH(3)-dependent NAD(+) synthetase from Buchnera aphidicola subsp. Acyrthosiphon pisum (strain APS) (Acyrthosiphon pisum symbiotic bacterium).